We begin with the raw amino-acid sequence, 206 residues long: dITP/XTP pyrophosphatase (206 aa).

7–12 provides a ligand contact to substrate; the sequence is TSNKDK. D74 acts as the Proton acceptor in catalysis. D74 is a binding site for Mg(2+). Substrate is bound by residues S75, 159 to 162, K182, and 187 to 188; these read FGYD and HR.

Belongs to the HAM1 NTPase family. In terms of assembly, homodimer. Mg(2+) is required as a cofactor.

It catalyses the reaction XTP + H2O = XMP + diphosphate + H(+). The enzyme catalyses dITP + H2O = dIMP + diphosphate + H(+). The catalysed reaction is ITP + H2O = IMP + diphosphate + H(+). Pyrophosphatase that catalyzes the hydrolysis of nucleoside triphosphates to their monophosphate derivatives, with a high preference for the non-canonical purine nucleotides XTP (xanthosine triphosphate), dITP (deoxyinosine triphosphate) and ITP. Seems to function as a house-cleaning enzyme that removes non-canonical purine nucleotides from the nucleotide pool, thus preventing their incorporation into DNA/RNA and avoiding chromosomal lesions. In Campylobacter hominis (strain ATCC BAA-381 / DSM 21671 / CCUG 45161 / LMG 19568 / NCTC 13146 / CH001A), this protein is dITP/XTP pyrophosphatase.